Here is a 128-residue protein sequence, read N- to C-terminus: Ribonuclease P protein component (128 aa).

It belongs to the RnpA family. As to quaternary structure, consists of a catalytic RNA component (M1 or rnpB) and a protein subunit.

The catalysed reaction is Endonucleolytic cleavage of RNA, removing 5'-extranucleotides from tRNA precursor.. Its function is as follows. RNaseP catalyzes the removal of the 5'-leader sequence from pre-tRNA to produce the mature 5'-terminus. It can also cleave other RNA substrates such as 4.5S RNA. The protein component plays an auxiliary but essential role in vivo by binding to the 5'-leader sequence and broadening the substrate specificity of the ribozyme. This Synechococcus sp. (strain CC9902) protein is Ribonuclease P protein component.